The following is a 428-amino-acid chain: MEVADSLLGNGSDVPPPCELGLENETLVCLEQPRAAKEWQPAVQILLYSLIFLLSVLGNTLVITVLIRNKRMRTVTNIFLLSLAVSDLMLCLFCMPFNLIPNLLKDFIFGSAVCKTTTYFMGTSVSVSTFNLVAISLERYGAICKPLQSRVWQTKSHALKVIATTWCLSFTIMTPYPIYSNLVPFTKTNNQTANMCRFLLPNDVMQQSWHTFLLLILFLIPGIVMMVAYGLISLELYQGIKFDAIQKKSARDRNPSTGSSGRYEDGDGCYLQKARPRRRLELRQLSTPGSGRLNRIRSTSSTANLMAKKRVIRMLMVIVVLFFLCWMPIFSANAWRAYDTASAERRLSGTPISFILLLSYTSSCVNPIIYCFMNKRFRLGFLATFPCCPHPGPPGPRGEVGEEEEGRTTGASLSRYSYSHMSASAPGP.

Over 1 to 41 (MEVADSLLGNGSDVPPPCELGLENETLVCLEQPRAAKEWQP) the chain is Extracellular. Residues Asn10 and Asn24 are each glycosylated (N-linked (GlcNAc...) asparagine). Cys18 and Cys29 are joined by a disulfide. Residues 42–67 (AVQILLYSLIFLLSVLGNTLVITVLI) form a helical membrane-spanning segment. The Cytoplasmic portion of the chain corresponds to 68 to 77 (RNKRMRTVTN). A helical membrane pass occupies residues 78–104 (IFLLSLAVSDLMLCLFCMPFNLIPNLL). Residues 105 to 115 (KDFIFGSAVCK) are Extracellular-facing. An intrachain disulfide couples Cys114 to Cys196. The chain crosses the membrane as a helical span at residues 116 to 137 (TTTYFMGTSVSVSTFNLVAISL). Residues 138-157 (ERYGAICKPLQSRVWQTKSH) lie on the Cytoplasmic side of the membrane. Residues 158–178 (ALKVIATTWCLSFTIMTPYPI) traverse the membrane as a helical segment. Residues 179–210 (YSNLVPFTKTNNQTANMCRFLLPNDVMQQSWH) are Extracellular-facing. The N-linked (GlcNAc...) asparagine glycan is linked to Asn190. The chain crosses the membrane as a helical span at residues 211-234 (TFLLLILFLIPGIVMMVAYGLISL). Residues 235-313 (ELYQGIKFDA…NLMAKKRVIR (79 aa)) are Cytoplasmic-facing. A disordered region spans residues 250–269 (ARDRNPSTGSSGRYEDGDGC). The helical transmembrane segment at 314 to 334 (MLMVIVVLFFLCWMPIFSANA) threads the bilayer. Residues 335–349 (WRAYDTASAERRLSG) lie on the Extracellular side of the membrane. A helical transmembrane segment spans residues 350-373 (TPISFILLLSYTSSCVNPIIYCFM). Over 374–428 (NKRFRLGFLATFPCCPHPGPPGPRGEVGEEEEGRTTGASLSRYSYSHMSASAPGP) the chain is Cytoplasmic. Cys387 carries S-palmitoyl cysteine lipidation. The interval 393–428 (PPGPRGEVGEEEEGRTTGASLSRYSYSHMSASAPGP) is disordered. The span at 409–422 (TGASLSRYSYSHMS) shows a compositional bias: polar residues.

Belongs to the G-protein coupled receptor 1 family.

It is found in the cell membrane. Functionally, receptor for cholecystokinin. Mediates pancreatic growth and enzyme secretion, smooth muscle contraction of the gall bladder and stomach. Has a 1000-fold higher affinity for CCK rather than for gastrin. It modulates feeding and dopamine-induced behavior in the central and peripheral nervous system. This receptor mediates its action by association with G proteins that activate a phosphatidylinositol-calcium second messenger system. In Canis lupus familiaris (Dog), this protein is Cholecystokinin receptor type A (CCKAR).